Consider the following 391-residue polypeptide: Succinyl-diaminopimelate desuccinylase (391 aa).

Histidine 74 lines the Zn(2+) pocket. Aspartate 76 is an active-site residue. Aspartate 107 is a binding site for Zn(2+). The active-site Proton acceptor is the glutamate 141. Zn(2+)-binding residues include glutamate 142, glutamate 170, and histidine 360.

Belongs to the peptidase M20A family. DapE subfamily. Homodimer. Requires Zn(2+) as cofactor. Co(2+) serves as cofactor.

The catalysed reaction is N-succinyl-(2S,6S)-2,6-diaminopimelate + H2O = (2S,6S)-2,6-diaminopimelate + succinate. It functions in the pathway amino-acid biosynthesis; L-lysine biosynthesis via DAP pathway; LL-2,6-diaminopimelate from (S)-tetrahydrodipicolinate (succinylase route): step 3/3. Functionally, catalyzes the hydrolysis of N-succinyl-L,L-diaminopimelic acid (SDAP), forming succinate and LL-2,6-diaminopimelate (DAP), an intermediate involved in the bacterial biosynthesis of lysine and meso-diaminopimelic acid, an essential component of bacterial cell walls. This is Succinyl-diaminopimelate desuccinylase from Variovorax paradoxus (strain S110).